A 410-amino-acid chain; its full sequence is Elongation factor Tu, chloroplastic (410 aa).

Positions 10–214 (KPHVNIGTIG…QVDAYIPTPE (205 aa)) constitute a tr-type G domain. The G1 stretch occupies residues 19-26 (GHVDHGKT). 19 to 26 (GHVDHGKT) is a GTP binding site. Thr-26 is a binding site for Mg(2+). Positions 60–64 (GITIN) are G2. Positions 81-84 (DCPG) are G3. Residues 81–85 (DCPGH) and 136–139 (NKED) contribute to the GTP site. Residues 136–139 (NKED) are G4. Positions 174-176 (SAL) are G5.

This sequence belongs to the TRAFAC class translation factor GTPase superfamily. Classic translation factor GTPase family. EF-Tu/EF-1A subfamily.

Its subcellular location is the plastid. It is found in the chloroplast. It carries out the reaction GTP + H2O = GDP + phosphate + H(+). Its function is as follows. GTP hydrolase that promotes the GTP-dependent binding of aminoacyl-tRNA to the A-site of ribosomes during protein biosynthesis. The protein is Elongation factor Tu, chloroplastic (tufA) of Chlorokybus atmophyticus (Soil alga).